The following is a 187-amino-acid chain: Segregation and condensation protein B (187 aa).

Belongs to the ScpB family. In terms of assembly, homodimer. Homodimerization may be required to stabilize the binding of ScpA to the Smc head domains. Component of a cohesin-like complex composed of ScpA, ScpB and the Smc homodimer, in which ScpA and ScpB bind to the head domain of Smc. The presence of the three proteins is required for the association of the complex with DNA.

The protein localises to the cytoplasm. In terms of biological role, participates in chromosomal partition during cell division. May act via the formation of a condensin-like complex containing Smc and ScpA that pull DNA away from mid-cell into both cell halves. The chain is Segregation and condensation protein B from Agathobacter rectalis (strain ATCC 33656 / DSM 3377 / JCM 17463 / KCTC 5835 / VPI 0990) (Eubacterium rectale).